Consider the following 341-residue polypeptide: Gibberellin 2-beta-dioxygenase 2 (341 aa).

One can recognise a Fe2OG dioxygenase domain in the interval 179 to 283; that stretch reads KSDSCLRLNH…RISMIYFGGP (105 aa). Residues H207, D209, and H264 each coordinate Fe cation. The active site involves R274. R274 is a 2-oxoglutarate binding site.

It belongs to the iron/ascorbate-dependent oxidoreductase family. GA2OX subfamily. Requires Fe(2+) as cofactor. In terms of tissue distribution, preferentially expressed in flowers, siliques, and upper stems. Expressed in cotyledons, at the base of the shoot apical meristem and developing leaf primordia.

The catalysed reaction is gibberellin A1 + 2-oxoglutarate + O2 = gibberellin A8 + succinate + CO2. Its pathway is plant hormone biosynthesis; gibberellin biosynthesis. Its function is as follows. Catalyzes the 2-beta-hydroxylation of several biologically active gibberellins, leading to the homeostatic regulation of their endogenous level. Catabolism of gibberellins (GAs) plays a central role in plant development. Converts GA9/GA20 to GA51/GA29 and GA4/GA1 to GA34/GA8. This chain is Gibberellin 2-beta-dioxygenase 2 (GA2OX2), found in Arabidopsis thaliana (Mouse-ear cress).